Reading from the N-terminus, the 667-residue chain is Mannosyl-oligosaccharide alpha-1,2-mannosidase IA (667 aa).

Topologically, residues 1–18 are cytoplasmic; the sequence is MYRISPIGRKSNFHSREK. A helical; Signal-anchor for type II membrane protein membrane pass occupies residues 19-39; sequence CLIGLVLVTLCFLCFGGIFLL. Residues 40-667 are Lumenal-facing; the sequence is PDNFGSDRVL…PVTLPVSNAS (628 aa). The disordered stretch occupies residues 154-192; that stretch reads GDNAASQASSHPQSSAQQHNQQQPQLPLGGGGNDQAPDT. The span at 156–178 shows a compositional bias: low complexity; the sequence is NAASQASSHPQSSAQQHNQQQPQ. N-linked (GlcNAc...) asparagine glycosylation occurs at asparagine 278. Cysteine 483 and cysteine 515 are oxidised to a cystine. The active-site Proton donor is glutamate 529. Ca(2+) is bound at residue threonine 640.

It belongs to the glycosyl hydrolase 47 family. The cofactor is Ca(2+). It depends on Mg(2+) as a cofactor. Complex spatial distribution during embryogenesis, including expression in lobula plate giant neurons. Also expressed in adult wing and eyes.

It is found in the golgi apparatus membrane. The catalysed reaction is N(4)-(alpha-D-Man-(1-&gt;2)-alpha-D-Man-(1-&gt;2)-alpha-D-Man-(1-&gt;3)-[alpha-D-Man-(1-&gt;2)-alpha-D-Man-(1-&gt;3)-[alpha-D-Man-(1-&gt;2)-alpha-D-Man-(1-&gt;6)]-alpha-D-Man-(1-&gt;6)]-beta-D-Man-(1-&gt;4)-beta-D-GlcNAc-(1-&gt;4)-beta-D-GlcNAc)-L-asparaginyl-[protein] (N-glucan mannose isomer 9A1,2,3B1,2,3) + 4 H2O = N(4)-(alpha-D-Man-(1-&gt;3)-[alpha-D-Man-(1-&gt;3)-[alpha-D-Man-(1-&gt;6)]-alpha-D-Man-(1-&gt;6)]-beta-D-Man-(1-&gt;4)-beta-D-GlcNAc-(1-&gt;4)-beta-D-GlcNAc)-L-asparaginyl-[protein] (N-glucan mannose isomer 5A1,2) + 4 beta-D-mannose. It carries out the reaction N(4)-(alpha-D-Man-(1-&gt;2)-alpha-D-Man-(1-&gt;2)-alpha-D-Man-(1-&gt;3)-[alpha-D-Man-(1-&gt;3)-[alpha-D-Man-(1-&gt;2)-alpha-D-Man-(1-&gt;6)]-alpha-D-Man-(1-&gt;6)]-beta-D-Man-(1-&gt;4)-beta-D-GlcNAc-(1-&gt;4)-beta-D-GlcNAc)-L-asparaginyl-[protein] (N-glucan mannose isomer 8A1,2,3B1,3) + 3 H2O = N(4)-(alpha-D-Man-(1-&gt;3)-[alpha-D-Man-(1-&gt;3)-[alpha-D-Man-(1-&gt;6)]-alpha-D-Man-(1-&gt;6)]-beta-D-Man-(1-&gt;4)-beta-D-GlcNAc-(1-&gt;4)-beta-D-GlcNAc)-L-asparaginyl-[protein] (N-glucan mannose isomer 5A1,2) + 3 beta-D-mannose. The protein operates within protein modification; protein glycosylation. Its function is as follows. Involved in the maturation of Asn-linked oligosaccharides. Progressively trim alpha-1,2-linked mannose residues from Man(9)GlcNAc(2) to produce Man(5)GlcNAc(2). The polypeptide is Mannosyl-oligosaccharide alpha-1,2-mannosidase IA (Drosophila melanogaster (Fruit fly)).